The sequence spans 603 residues: DNA mismatch repair protein MutL (603 aa).

Basic and acidic residues predominate over residues 337–347 (ISKKQKEDQKS). A disordered region spans residues 337–383 (ISKKQKEDQKSEQIQMSFEENKPVKETPTLFSKPTIPEYVPSDEDAP).

This sequence belongs to the DNA mismatch repair MutL/HexB family.

In terms of biological role, this protein is involved in the repair of mismatches in DNA. It is required for dam-dependent methyl-directed DNA mismatch repair. May act as a 'molecular matchmaker', a protein that promotes the formation of a stable complex between two or more DNA-binding proteins in an ATP-dependent manner without itself being part of a final effector complex. In Listeria monocytogenes serotype 4b (strain F2365), this protein is DNA mismatch repair protein MutL.